A 60-amino-acid polypeptide reads, in one-letter code: Large ribosomal subunit protein uL30 (60 aa).

It belongs to the universal ribosomal protein uL30 family. Part of the 50S ribosomal subunit.

The polypeptide is Large ribosomal subunit protein uL30 (Symbiobacterium thermophilum (strain DSM 24528 / JCM 14929 / IAM 14863 / T)).